The primary structure comprises 49 residues: Large ribosomal subunit protein bL33C (49 aa).

The segment at 20–49 (NKNKRNNPDRLEKQKYCPRERKVTLHRETK) is disordered. The segment covering 25–49 (NNPDRLEKQKYCPRERKVTLHRETK) has biased composition (basic and acidic residues).

Belongs to the bacterial ribosomal protein bL33 family.

In Enterococcus faecalis (strain ATCC 700802 / V583), this protein is Large ribosomal subunit protein bL33C (rpmG3).